We begin with the raw amino-acid sequence, 52 residues long: ADIDVSRNWFVSIDIRKLYLKTDASGYLGPQEAKAKVTLDPLITSIAIGRQF.

It participates in aromatic compound metabolism; naphthalene degradation. In terms of biological role, may be involved in the conversion of 2-hydroxy-4-(2'-oxo-3,5-cyclohexadienyl)-buta-2,4-dienoate to cis-O-hydroxybenzylidenepyruvate. DoxH and DoxJ encode different enzymes that may have interchangeable functions. This chain is Dibenzothiophene metabolism operon protein NahQ/DoxH (nahQ), found in Pseudomonas putida (Arthrobacter siderocapsulatus).